The sequence spans 581 residues: ATP-dependent lipid A-core flippase (581 aa).

5 consecutive transmembrane segments (helical) span residues 27–47, 63–83, 154–174, 251–271, and 279–299; these read VFLA…FPAI, MVWL…VIVY, IALI…TLAI, MTPI…FLAL, and GASA…ISPV. An ABC transmembrane type-1 domain is found at 28–311; the sequence is FLAVIGMVGT…LATVNPTIQR (284 aa). The region spanning 343 to 579 is the ABC transporter domain; it reads ICFDNVSLRY…GSYYANLSRL (237 aa). 377–384 contributes to the ATP binding site; that stretch reads GASGGGKS.

It belongs to the ABC transporter superfamily. Lipid exporter (TC 3.A.1.106) family. In terms of assembly, homodimer.

The protein localises to the cell inner membrane. It catalyses the reaction ATP + H2O + lipid A-core oligosaccharideSide 1 = ADP + phosphate + lipid A-core oligosaccharideSide 2.. Functionally, involved in lipopolysaccharide (LPS) biosynthesis. Translocates lipid A-core from the inner to the outer leaflet of the inner membrane. Transmembrane domains (TMD) form a pore in the inner membrane and the ATP-binding domain (NBD) is responsible for energy generation. The polypeptide is ATP-dependent lipid A-core flippase (Albidiferax ferrireducens (strain ATCC BAA-621 / DSM 15236 / T118) (Rhodoferax ferrireducens)).